Consider the following 159-residue polypeptide: Type-1 angiotensin II receptor-associated protein (159 aa).

The Extracellular portion of the chain corresponds to 1–23; it reads MELPAVNLKVILLGHWLLTTWGC. Residues 24-44 traverse the membrane as a helical segment; the sequence is IVFSGSYAWANFTILALGVWA. Over 45-55 the chain is Cytoplasmic; that stretch reads VAQRDSIDAIS. Residues 56–76 traverse the membrane as a helical segment; that stretch reads MFLGGLLATIFLDIVHISIFY. Residues 77–86 are Extracellular-facing; that stretch reads PRVSLTDTGR. Residues 87–107 form a helical membrane-spanning segment; sequence FGVGMAILSLLLKPLSCCFVY. At 108-159 the chain is on the cytoplasmic side; the sequence is HMYRERGGELLVHTGFLGSSQDRSAYQTIDSAEAPADPFAVPEGRSQDARGY. The tract at residues 110–122 is interaction with AGTR1; the sequence is YRERGGELLVHTG. A phosphoserine mark is found at S126 and S127. T135 carries the post-translational modification Phosphothreonine. 2 positions are modified to phosphoserine: S138 and S153. Positions 140–159 are disordered; sequence EAPADPFAVPEGRSQDARGY.

In terms of assembly, interacts with RACK1, and with the C-terminal region of AGTR1. Ubiquitous but more abundant in kidney, heart, pancreas and thyroid.

Its subcellular location is the endoplasmic reticulum membrane. It localises to the golgi apparatus membrane. The protein resides in the cytoplasmic vesicle membrane. Functionally, appears to be a negative regulator of type-1 angiotensin II receptor-mediated signaling by regulating receptor internalization as well as mechanism of receptor desensitization such as phosphorylation. Also induces a decrease in cell proliferation and angiotensin II-stimulated transcriptional activity. This is Type-1 angiotensin II receptor-associated protein (AGTRAP) from Homo sapiens (Human).